The primary structure comprises 1161 residues: BMP-2-inducible protein kinase (1161 aa).

Positions 1 to 20 (MKKFSRMPKSEGGSGGGAAG) are disordered. Position 14 is a phosphoserine (Ser14). Positions 51–316 (VTLEESLAEG…DIFQVSYFAF (266 aa)) constitute a Protein kinase domain. Residues 57–65 (LAEGGFSTV) and Lys79 each bind ATP. Asp180 serves as the catalytic Proton acceptor. Disordered stretches follow at residues 358–439 (TDTI…RVLQ), 453–495 (LQHR…HHHL), 610–630 (TNQK…FGED), and 655–832 (ERAS…TQDL). A compositionally biased stretch (polar residues) spans 361–394 (IGPTETSIAPRQRPKANSATTATPSVLTIQSSAT). Composition is skewed to low complexity over residues 422 to 439 (LLGQ…RVLQ) and 460 to 485 (QQQQ…QQQQ). The segment covering 610–619 (TNQKNISNPP) has biased composition (polar residues). At Ser689 the chain carries Phosphoserine. 2 stretches are compositionally biased toward polar residues: residues 697 to 718 (SSIN…SPAS) and 726 to 735 (KTSVQGQVQK). Ser742 carries the post-translational modification Phosphoserine. The span at 755–779 (EEEEQDDEEVLQGEQGDFNDDDTEP) shows a compositional bias: acidic residues. Over residues 798–813 (EKHSSDSDYEQAKAKY) the composition is skewed to basic and acidic residues. 2 positions are modified to phosphoserine: Ser817 and Ser818. Thr834 is modified (phosphothreonine). Ser928 is subject to Phosphoserine. A disordered region spans residues 965-1035 (SQQQKVKQRS…RRDSQSSNEF (71 aa)). Residues 970 to 984 (VKQRSLQKLSSRQRR) are compositionally biased toward basic residues. Positions 1000–1011 (TPTSTKKTLKPT) are enriched in low complexity. A phosphoserine mark is found at Ser1029, Ser1031, Ser1032, Ser1039, Ser1041, Ser1076, Ser1107, and Ser1111. A compositionally biased stretch (polar residues) spans 1137-1146 (TPHQSQQSQP). The disordered stretch occupies residues 1137–1161 (TPHQSQQSQPVELDPFGAAPFPSKQ).

The protein belongs to the protein kinase superfamily. Ser/Thr protein kinase family. In terms of processing, autophosphorylated.

The protein resides in the nucleus. The enzyme catalyses L-seryl-[protein] + ATP = O-phospho-L-seryl-[protein] + ADP + H(+). The catalysed reaction is L-threonyl-[protein] + ATP = O-phospho-L-threonyl-[protein] + ADP + H(+). Functionally, may be involved in osteoblast differentiation. This is BMP-2-inducible protein kinase (BMP2K) from Homo sapiens (Human).